The following is a 1069-amino-acid chain: Protocadherin-7 (1069 aa).

Positions 1–28 are cleaved as a signal peptide; it reads MLRMRTAGWARGWCLGCCLLLPLSLSLA. Cadherin domains lie at 29–143, 144–308, 309–415, 424–535, 536–639, 640–742, and 745–862; these read AAKQ…TPTF, PSPV…SPRF, EKSV…VPSI, PLKD…PPMF, GQSV…DPKF, MQDV…APTV, and PKNI…IPLT. Over 29–879 the chain is Extracellular; the sequence is AAKQLLRYRL…SYEISKQRLS (851 aa). An N-linked (GlcNAc...) asparagine glycan is attached at Asn-79. Residues 182-242 form a disordered region; that stretch reads LLQEPGGGGS…GGTNPGGRSS (61 aa). Positions 207 to 221 are enriched in gly residues; that stretch reads PGGGGNGASGGGSGG. N-linked (GlcNAc...) asparagine glycosylation is found at Asn-689, Asn-747, Asn-780, Asn-822, Asn-840, and Asn-845. A helical transmembrane segment spans residues 880 to 900; that stretch reads IVIGVVAGIMTVILIILIVVM. Topologically, residues 901–1069 are cytoplasmic; it reads ARYCRSKNKN…RLHPYITVFG (169 aa). The disordered stretch occupies residues 910-988; that stretch reads NGYEAGKKDH…RYRSVNGGPG (79 aa). Residues 930-944 show a composition bias toward basic residues; it reads KSKKPKKDKKNKKSK. Residues Ser-989 and Ser-1011 each carry the phosphoserine modification.

In terms of tissue distribution, expressed predominantly in brain and heart and at lower levels in various other tissues.

Its subcellular location is the cell membrane. This Homo sapiens (Human) protein is Protocadherin-7 (PCDH7).